The chain runs to 382 residues: Galactokinase (382 aa).

34-37 contacts substrate; it reads EHTD. 124-130 serves as a coordination point for ATP; sequence GAGLSSS. Mg(2+)-binding residues include Ser-130 and Glu-162. Residue Asp-174 is the Proton acceptor of the active site. Residue Tyr-223 participates in substrate binding.

Belongs to the GHMP kinase family. GalK subfamily.

Its subcellular location is the cytoplasm. The enzyme catalyses alpha-D-galactose + ATP = alpha-D-galactose 1-phosphate + ADP + H(+). Its pathway is carbohydrate metabolism; galactose metabolism. Its function is as follows. Catalyzes the transfer of the gamma-phosphate of ATP to D-galactose to form alpha-D-galactose-1-phosphate (Gal-1-P). The protein is Galactokinase of Escherichia fergusonii (strain ATCC 35469 / DSM 13698 / CCUG 18766 / IAM 14443 / JCM 21226 / LMG 7866 / NBRC 102419 / NCTC 12128 / CDC 0568-73).